We begin with the raw amino-acid sequence, 214 residues long: Ribosomal RNA small subunit methyltransferase G (214 aa).

S-adenosyl-L-methionine is bound by residues Gly81, Met86, 132-133, and Arg147; that span reads VE.

This sequence belongs to the methyltransferase superfamily. RNA methyltransferase RsmG family.

Its subcellular location is the cytoplasm. The catalysed reaction is guanosine(527) in 16S rRNA + S-adenosyl-L-methionine = N(7)-methylguanosine(527) in 16S rRNA + S-adenosyl-L-homocysteine. Specifically methylates the N7 position of guanine in position 527 of 16S rRNA. The polypeptide is Ribosomal RNA small subunit methyltransferase G (Pseudomonas paraeruginosa (strain DSM 24068 / PA7) (Pseudomonas aeruginosa (strain PA7))).